A 206-amino-acid chain; its full sequence is Methyltransferase-like 26 (206 aa).

Belongs to the UPF0585 family.

The sequence is that of Methyltransferase-like 26 from Danio rerio (Zebrafish).